Consider the following 439-residue polypeptide: Adenylosuccinate synthetase (439 aa).

GTP-binding positions include 25-31 (GDEGKGK) and 53-55 (GHT). Residue Asp-26 is the Proton acceptor of the active site. Positions 26 and 53 each coordinate Mg(2+). Residues 26 to 29 (DEGK), 51 to 54 (NAGH), Thr-146, Arg-160, Asn-237, Thr-252, and Arg-316 each bind IMP. His-54 (proton donor) is an active-site residue. Residue 312–318 (VTTGRRR) participates in substrate binding. GTP is bound by residues Arg-318, 344-346 (KLD), and 426-428 (GVG).

It belongs to the adenylosuccinate synthetase family. As to quaternary structure, homodimer. Mg(2+) serves as cofactor.

The protein localises to the cytoplasm. The catalysed reaction is IMP + L-aspartate + GTP = N(6)-(1,2-dicarboxyethyl)-AMP + GDP + phosphate + 2 H(+). Its pathway is purine metabolism; AMP biosynthesis via de novo pathway; AMP from IMP: step 1/2. Functionally, plays an important role in the de novo pathway and in the salvage pathway of purine nucleotide biosynthesis. Catalyzes the first committed step in the biosynthesis of AMP from IMP. This chain is Adenylosuccinate synthetase, found in Mycosarcoma maydis (Corn smut fungus).